Reading from the N-terminus, the 345-residue chain is Protein RecA (345 aa).

81–88 (GPESSGKT) lines the ATP pocket.

Belongs to the RecA family.

The protein resides in the cytoplasm. Its function is as follows. Can catalyze the hydrolysis of ATP in the presence of single-stranded DNA, the ATP-dependent uptake of single-stranded DNA by duplex DNA, and the ATP-dependent hybridization of homologous single-stranded DNAs. It interacts with LexA causing its activation and leading to its autocatalytic cleavage. The protein is Protein RecA of Mycoplasma mycoides.